Consider the following 292-residue polypeptide: Zinc finger protein OZF (292 aa).

10 C2H2-type zinc fingers span residues 16-38 (FACK…EHFH), 44-66 (FECN…QNTH), 72-94 (FECN…QKIH), 100-122 (FECK…QRTH), 128-150 (FVCK…EKIH), 156-178 (FKCS…QNIH), 184-206 (YECN…VRIH), 212-234 (YECN…VRSH), 240-262 (YGCN…LRIH), and 268-290 (YQCS…QKIH). Glycyl lysine isopeptide (Lys-Gly) (interchain with G-Cter in SUMO2) cross-links involve residues Lys-28, Lys-51, and Lys-56. Glycyl lysine isopeptide (Lys-Gly) (interchain with G-Cter in SUMO) cross-links involve residues Lys-157 and Lys-169. A Glycyl lysine isopeptide (Lys-Gly) (interchain with G-Cter in SUMO2) cross-link involves residue Lys-173. The interaction with TERF2IP stretch occupies residues 212-292 (YECNVCGKAF…HIRHQKIHTH (81 aa)).

This sequence belongs to the krueppel C2H2-type zinc-finger protein family. As to quaternary structure, binds DNA. Interacts with SUMO conjugating enzyme UBC9/UBE2I. Interacts with the telomeric protein TERF2IP. Sumoylated. As to expression, liver, skeletal and heart muscle, mammary cells. Very low levels in brain, lung, placenta and kidney. Strongly overexpressed in many pancreas and colorectal cancers. Increased gene copy numbers are detected in 3 of 12 tumor cell lines and 2 of 12 primary pancreatic carcinomas. Overexpressed in 80% of colorectal cancers.

The protein localises to the nucleus. This is Zinc finger protein OZF (ZNF146) from Homo sapiens (Human).